Consider the following 1178-residue polypeptide: Double-stranded RNA-specific adenosine deaminase (1178 aa).

A disordered region spans residues 1-40 (MSQGFRGPTGVFPHQTQSYLDPSHEHSKWRYPQPQGPESY). 2 positions are modified to asymmetric dimethylarginine: R30 and R42. Residues 135–201 (LSISQSPEQK…GKPPLWSLVP (67 aa)) form the Z-binding 1 domain. The segment at 135 to 204 (LSISQSPEQK…PLWSLVPLSQ (70 aa)) is interaction with Z-DNA. Residues 221-244 (EFPRGEPGLDSEDGDPASDLEGPS) are disordered. The segment covering 229–238 (LDSEDGDPAS) has biased composition (acidic residues). Residues S231 and S238 each carry the phosphoserine modification. The Z-binding 2 domain occupies 246–310 (PLDMAEIKEK…ATPPIWYLTD (65 aa)). The interval 316–383 (LQMKRSTHSA…SRHEARPGPM (68 aa)) is disordered. A compositionally biased stretch (low complexity) spans 323–337 (HSAPAPTPTAVPEAT). Basic and acidic residues predominate over residues 360-379 (KRVENGQEPAIKHESRHEAR). Residue K371 forms a Glycyl lysine isopeptide (Lys-Gly) (interchain with G-Cter in SUMO); alternate linkage. K371 is covalently cross-linked (Glycyl lysine isopeptide (Lys-Gly) (interchain with G-Cter in SUMO1); alternate). K371 participates in a covalent cross-link: Glycyl lysine isopeptide (Lys-Gly) (interchain with G-Cter in SUMO2); alternate. Position 434 is a phosphoserine (S434). The DRBM 1 domain occupies 456 to 524 (NPVSGLLEYA…AVKAMAILLR (69 aa)). Over residues 527 to 550 (KAKDSGQPEDLSHCPMEEDSEKPA) the composition is skewed to basic and acidic residues. The disordered stretch occupies residues 527 to 564 (KAKDSGQPEDLSHCPMEEDSEKPAEAQAPSSSATSLFS). Residues 554–564 (APSSSATSLFS) are compositionally biased toward polar residues. S567, S582, and S589 each carry phosphoserine. The DRBM 2 domain maps to 567–635 (SPVTTLLECM…AEEAMKALQE (69 aa)). Residues 631-657 (KALQEEAASSADDQSGGANTDSLDESM) are disordered. A compositionally biased stretch (low complexity) spans 635–648 (EEAASSADDQSGGA). The tract at residues 665–674 (IGELVRYLNT) is N-terminal extension of DRBM 3 and constituent of a bi-partite nuclear localization signal. One can recognise a DRBM 3 domain in the interval 675–743 (NPVGGLLEYA…ADAALRVLIG (69 aa)). Residues 744–750 (ESEKAEQ) form a C-terminal extension of DRBM 3 and constituent of a bi-partite nuclear localization signal region. At T757 the chain carries Phosphothreonine. 3 positions are modified to phosphoserine: S763, S772, and S774. A Glycyl lysine isopeptide (Lys-Gly) (interchain with G-Cter in SUMO2) cross-link involves residue K824. One can recognise an A to I editase domain in the interval 835-1170 (SLGTGNRCVK…ISKPQEEKNF (336 aa)). Position 859 (H859) interacts with Zn(2+). E861 serves as the catalytic Proton donor. The Zn(2+) site is built by C915 and C985.

As to quaternary structure, homodimer. Homodimerization is essential for its catalytic activity. Isoform 5 can form heterodimers with ADARB1/ADAR2. Isoform 1 and isoform 5 (via DRBM 3 domain) interact with TNPO1. Isoform 5 (via DRBM domains) interacts with XPO5. Isoform 1 and isoform 5 can interact with UPF1. Isoform 1 interacts with ILF2/NF45 and ILF3/NF90. Binding to ILF3/NF90 up-regulates ILF3-mediated gene expression. Isoform 1 and isoform 5 interact with EIF2AK2/PKR. In terms of processing, sumoylation reduces RNA-editing activity. As to expression, highest levels in brain and spleen. Lowest levels in liver.

It is found in the cytoplasm. The protein resides in the nucleus. The protein localises to the nucleolus. The catalysed reaction is adenosine in double-stranded RNA + H2O + H(+) = inosine in double-stranded RNA + NH4(+). In terms of biological role, catalyzes the hydrolytic deamination of adenosine to inosine in double-stranded RNA (dsRNA) referred to as A-to-I RNA editing. This may affect gene expression and function in a number of ways that include mRNA translation by changing codons and hence the amino acid sequence of proteins since the translational machinery read the inosine as a guanosine; pre-mRNA splicing by altering splice site recognition sequences; RNA stability by changing sequences involved in nuclease recognition; genetic stability in the case of RNA virus genomes by changing sequences during viral RNA replication; and RNA structure-dependent activities such as microRNA production or targeting or protein-RNA interactions. Can edit both viral and cellular RNAs and can edit RNAs at multiple sites (hyper-editing) or at specific sites (site-specific editing). Its cellular RNA substrates include: bladder cancer-associated protein (BLCAP), neurotransmitter receptors for glutamate (GRIA2) and serotonin (HTR2C) and GABA receptor (GABRA3). Site-specific RNA editing of transcripts encoding these proteins results in amino acid substitutions which consequently alters their functional activities. Exhibits low-level editing at the GRIA2 Q/R site, but edits efficiently at the R/G site and HOTSPOT1. Does not affect polyomavirus replication but provides protection against virus-induced cytopathic effects. Essential for embryonic development and cell survival and plays a critical role in the maintenance of hematopoietic stem cells. The polypeptide is Double-stranded RNA-specific adenosine deaminase (Adar) (Mus musculus (Mouse)).